Reading from the N-terminus, the 212-residue chain is Uracil phosphoribosyltransferase (212 aa).

Residues Arg78, Arg103, and 130-138 (DPMLATGGS) contribute to the 5-phospho-alpha-D-ribose 1-diphosphate site. Uracil contacts are provided by residues Ile193 and 198–200 (GDA). Position 199 (Asp199) interacts with 5-phospho-alpha-D-ribose 1-diphosphate.

Belongs to the UPRTase family. It depends on Mg(2+) as a cofactor.

The catalysed reaction is UMP + diphosphate = 5-phospho-alpha-D-ribose 1-diphosphate + uracil. It functions in the pathway pyrimidine metabolism; UMP biosynthesis via salvage pathway; UMP from uracil: step 1/1. With respect to regulation, allosterically activated by GTP. Its function is as follows. Catalyzes the conversion of uracil and 5-phospho-alpha-D-ribose 1-diphosphate (PRPP) to UMP and diphosphate. In Pseudomonas entomophila (strain L48), this protein is Uracil phosphoribosyltransferase.